The following is a 402-amino-acid chain: Argininosuccinate synthase (402 aa).

Residues Ala-10–Ser-18 and Ala-38 each bind ATP. Position 89 (Tyr-89) interacts with L-citrulline. Gly-119 contributes to the ATP binding site. The L-aspartate site is built by Thr-121, Asn-125, and Asp-126. Asn-125 lines the L-citrulline pocket. L-citrulline contacts are provided by Arg-129, Ser-177, Ser-186, Glu-262, and Tyr-274.

This sequence belongs to the argininosuccinate synthase family. Type 1 subfamily. As to quaternary structure, homotetramer.

It localises to the cytoplasm. The catalysed reaction is L-citrulline + L-aspartate + ATP = 2-(N(omega)-L-arginino)succinate + AMP + diphosphate + H(+). It participates in amino-acid biosynthesis; L-arginine biosynthesis; L-arginine from L-ornithine and carbamoyl phosphate: step 2/3. The chain is Argininosuccinate synthase from Prochlorococcus marinus (strain SARG / CCMP1375 / SS120).